The sequence spans 230 residues: Acyl-protein thioesterase 1 (230 aa).

Residues Ser119, Asp174, and His208 each act as charge relay system in the active site. The residue at position 224 (Lys224) is an N6-acetyllysine.

The protein belongs to the AB hydrolase superfamily. AB hydrolase 2 family. Homodimer. As to expression, ubiquitous. Detected at low levels in all tissues tested.

The protein resides in the cytoplasm. The protein localises to the cell membrane. Its subcellular location is the nucleus membrane. It is found in the endoplasmic reticulum. It carries out the reaction S-hexadecanoyl-L-cysteinyl-[protein] + H2O = L-cysteinyl-[protein] + hexadecanoate + H(+). It catalyses the reaction 1-hexadecanoyl-sn-glycero-3-phosphocholine + H2O = sn-glycerol 3-phosphocholine + hexadecanoate + H(+). The enzyme catalyses a 1-(9Z-octadecenoyl)-2-acyl-sn-glycero-3-phosphocholine + H2O = a 2-acyl-sn-glycero-3-phosphocholine + (9Z)-octadecenoate + H(+). Functionally, acts as an acyl-protein thioesterase. Hydrolyzes fatty acids from S-acylated cysteine residues in proteins such as trimeric G alpha proteins or HRAS. Acts as a palmitoyl thioesterase that catalyzes depalmitoylation of proteins, such as ADRB2, KCNMA1 and SQSTM1. Acts as a negative regulator of autophagy by mediating palmitoylation of SQSTM1, decreasing affinity between SQSTM1 and ATG8 proteins and recruitment of ubiquitinated cargo proteins to autophagosomes. Acts as a lysophospholipase and hydrolyzes lysophosphatidylcholine (lyso-PC). Also hydrolyzes lysophosphatidylethanolamine (lyso-PE), lysophosphatidylinositol (lyso-PI) and lysophosphatidylserine (lyso-PS). Has much higher thioesterase activity than lysophospholipase activity. Contributes to the production of lysophosphatidic acid (LPA) during blood coagulation by recognizing and cleaving plasma phospholipids to generate lysophospholipids which in turn act as substrates for ENPP2 to produce LPA. The protein is Acyl-protein thioesterase 1 (Lypla1) of Rattus norvegicus (Rat).